The following is a 429-amino-acid chain: Integral membrane protein GPR137C (429 aa).

Over residues 1–17 (MRVSVPGPAAAAAPAAG) the composition is skewed to low complexity. The tract at residues 1 to 29 (MRVSVPGPAAAAAPAAGREPSTPGGGSGG) is disordered. Over 1–48 (MRVSVPGPAAAAAPAAGREPSTPGGGSGGGGAVAAASGAAVPGSVQLA) the chain is Lumenal. A helical transmembrane segment spans residues 49–69 (LSVLHALLYAALFAFAYLQLW). Residues 70–83 (RLLLYRERRLSYQS) are Cytoplasmic-facing. Residues 84-104 (LCLFLCLLWAALRTTLFSAAF) form a helical membrane-spanning segment. Residues 105 to 120 (SLSGSLPLLRPPAHLH) lie on the Lumenal side of the membrane. The helical transmembrane segment at 121 to 141 (FFPHWLLYCFPSCLQFSTLCL) threads the bilayer. At 142–167 (LNLYLAEVICKVRCATELDRHKILLH) the chain is on the cytoplasmic side. A helical membrane pass occupies residues 168–188 (LGFIMASLLFLVVNLTCAMLV). Residues 189–205 (HGDVPENQLKWTVFVRA) lie on the Lumenal side of the membrane. A helical membrane pass occupies residues 206-226 (LINDSLFILCAISLVCYICKI). Topologically, residues 227–246 (TKMSSANVYLESKGMSLCQT) are cytoplasmic. Residues 247–267 (VVVGSVVILLYSSRACYNLVV) form a helical membrane-spanning segment. Over 268–300 (VTISQDTLESPFNYGWDNLSDKAHVEDISGEEY) the chain is Lumenal. An N-linked (GlcNAc...) asparagine glycan is attached at asparagine 285. Residues 301-321 (IVFGMVLFLWEHVPAWSVVLF) traverse the membrane as a helical segment. Residues 322 to 429 (FRAQRLNQNL…HHSLYVTPQN (108 aa)) are Cytoplasmic-facing.

Belongs to the GPR137 family.

The protein resides in the lysosome membrane. In terms of biological role, lysosomal integral membrane protein that may regulate MTORC1 complex translocation to lysosomes. The polypeptide is Integral membrane protein GPR137C (GPR137C) (Homo sapiens (Human)).